A 318-amino-acid chain; its full sequence is Homeobox-leucine zipper protein ATHB-4 (318 aa).

2 disordered regions span residues 1-23 (MGER…KEPS) and 128-165 (ARGG…RKKL). Low complexity predominate over residues 8–17 (LGLSLSLGNS). The segment covering 128 to 140 (ARGGDENEAERAS) has biased composition (basic and acidic residues). Positions 160–219 (GSRKKLRLSKDQALVLEETFKEHSTLNPKQKLALAKQLNLRARQVEVWFQNRRARTKLKQ) form a DNA-binding region, homeobox. The tract at residues 227-248 (LKRCCDNLTEENRRLQKEVSEL) is leucine-zipper.

Belongs to the HD-ZIP homeobox family. Class II subfamily.

The protein resides in the nucleus. Probable transcription factor. The sequence is that of Homeobox-leucine zipper protein ATHB-4 (ATHB-4) from Arabidopsis thaliana (Mouse-ear cress).